Consider the following 467-residue polypeptide: Squalene synthase (467 aa).

It belongs to the phytoene/squalene synthase family. Mg(2+) is required as a cofactor.

It carries out the reaction 2 (2E,6E)-farnesyl diphosphate + NADPH + H(+) = squalene + 2 diphosphate + NADP(+). It catalyses the reaction 2 (2E,6E)-farnesyl diphosphate + NADH + H(+) = squalene + 2 diphosphate + NAD(+). The protein operates within terpene metabolism; lanosterol biosynthesis; lanosterol from farnesyl diphosphate: step 1/3. Squalene synthase; part of the third module of ergosterol biosynthesis pathway that includes the late steps of the pathway. The third module or late pathway involves the ergosterol synthesis itself through consecutive reactions that mainly occur in the endoplasmic reticulum (ER) membrane. Firstly, the squalene synthase SQS catalyzes the condensation of 2 farnesyl pyrophosphate moieties to form squalene, which is the precursor of all steroids. Secondly, the squalene epoxidase catalyzes the stereospecific oxidation of squalene to (S)-2,3-epoxysqualene, which is considered to be a rate-limiting enzyme in steroid biosynthesis. Then, the lanosterol synthase LS catalyzes the cyclization of (S)-2,3 oxidosqualene to lanosterol, a reaction that forms the sterol core. In the next steps, lanosterol is transformed to ergosterol via a complex process involving various demethylation, reduction and desaturation reactions. Lanosterol is also an intermediate in the biosynthesis of triterpenes such as ganoderic acids (GA), a group of highly oxygenated lanostane-type triterpenoids which are well recognized as a main group of unique bioactive compounds in the medicinal mushroom Ganoderma lucidum. The polypeptide is Squalene synthase (Ganoderma lucidum (Ling zhi medicinal fungus)).